The chain runs to 435 residues: Chromosomal replication initiator protein DnaA (435 aa).

The tract at residues M1–I70 is domain I, interacts with DnaA modulators. The tract at residues I70–S98 is domain II. A domain III, AAA+ region region spans residues L99–S313. Residues G143, G145, K146, and T147 each contribute to the ATP site. The segment at Q314 to S435 is domain IV, binds dsDNA.

It belongs to the DnaA family. As to quaternary structure, oligomerizes as a right-handed, spiral filament on DNA at oriC.

Its subcellular location is the cytoplasm. In terms of biological role, plays an essential role in the initiation and regulation of chromosomal replication. ATP-DnaA binds to the origin of replication (oriC) to initiate formation of the DNA replication initiation complex once per cell cycle. Binds the DnaA box (a 9 base pair repeat at the origin) and separates the double-stranded (ds)DNA. Forms a right-handed helical filament on oriC DNA; dsDNA binds to the exterior of the filament while single-stranded (ss)DNA is stabiized in the filament's interior. The ATP-DnaA-oriC complex binds and stabilizes one strand of the AT-rich DNA unwinding element (DUE), permitting loading of DNA polymerase. After initiation quickly degrades to an ADP-DnaA complex that is not apt for DNA replication. Binds acidic phospholipids. This is Chromosomal replication initiator protein DnaA from Sulfurimonas denitrificans (strain ATCC 33889 / DSM 1251) (Thiomicrospira denitrificans (strain ATCC 33889 / DSM 1251)).